A 285-amino-acid chain; its full sequence is 2,3,4,5-tetrahydropyridine-2,6-dicarboxylate N-succinyltransferase (285 aa).

The protein belongs to the transferase hexapeptide repeat family.

The protein localises to the cytoplasm. It carries out the reaction (S)-2,3,4,5-tetrahydrodipicolinate + succinyl-CoA + H2O = (S)-2-succinylamino-6-oxoheptanedioate + CoA. Its pathway is amino-acid biosynthesis; L-lysine biosynthesis via DAP pathway; LL-2,6-diaminopimelate from (S)-tetrahydrodipicolinate (succinylase route): step 1/3. The sequence is that of 2,3,4,5-tetrahydropyridine-2,6-dicarboxylate N-succinyltransferase from Beijerinckia indica subsp. indica (strain ATCC 9039 / DSM 1715 / NCIMB 8712).